The primary structure comprises 54 residues: uncharacterized protein (54 aa).

A disordered region spans residues 1–54 (MWTLKARKEHTGISGKPTARTDRHGSTRSGDSELQASARRFSRLPDRCGAQGVT).

This is an uncharacterized protein from Mycobacterium tuberculosis (strain ATCC 25618 / H37Rv).